The following is an 89-amino-acid chain: Small ribosomal subunit protein uS15 (89 aa).

Positions 1–21 (MSITAERKAEVIKDNARDKGD) are enriched in basic and acidic residues. Residues 1–26 (MSITAERKAEVIKDNARDKGDTGSPE) are disordered.

Belongs to the universal ribosomal protein uS15 family. In terms of assembly, part of the 30S ribosomal subunit. Forms a bridge to the 50S subunit in the 70S ribosome, contacting the 23S rRNA.

Functionally, one of the primary rRNA binding proteins, it binds directly to 16S rRNA where it helps nucleate assembly of the platform of the 30S subunit by binding and bridging several RNA helices of the 16S rRNA. Its function is as follows. Forms an intersubunit bridge (bridge B4) with the 23S rRNA of the 50S subunit in the ribosome. In Sphingopyxis alaskensis (strain DSM 13593 / LMG 18877 / RB2256) (Sphingomonas alaskensis), this protein is Small ribosomal subunit protein uS15.